Here is a 116-residue protein sequence, read N- to C-terminus: Large ribosomal subunit protein uL14m (116 aa).

This sequence belongs to the universal ribosomal protein uL14 family.

Its subcellular location is the mitochondrion. The polypeptide is Large ribosomal subunit protein uL14m (RPL14) (Acanthamoeba polyphaga (Amoeba)).